A 117-amino-acid polypeptide reads, in one-letter code: Flagellar transcriptional regulator FlhD (117 aa).

The protein belongs to the FlhD family. Homodimer; disulfide-linked. Forms a heterohexamer composed of two FlhC and four FlhD subunits. Each FlhC binds a FlhD dimer, forming a heterotrimer, and a hexamer assembles by dimerization of two heterotrimers.

Its subcellular location is the cytoplasm. In terms of biological role, functions in complex with FlhC as a master transcriptional regulator that regulates transcription of several flagellar and non-flagellar operons by binding to their promoter region. Activates expression of class 2 flagellar genes, including fliA, which is a flagellum-specific sigma factor that turns on the class 3 genes. Also regulates genes whose products function in a variety of physiological pathways. The protein is Flagellar transcriptional regulator FlhD of Erwinia amylovora (strain CFBP1430).